The primary structure comprises 712 residues: Dynamin-1-like protein drp-1 (712 aa).

The Dynamin-type G domain occupies 24–304; the sequence is QIQLPQIVVV…LMHHIRNCLP (281 aa). A G1 motif region spans residues 34–41; that stretch reads GSQSAGKS. The G2 motif stretch occupies residues 60–62; it reads VTR. Residues 148-151 are G3 motif; sequence DLPG. The tract at residues 217–220 is G4 motif; it reads TKLD. Residues 247–250 are G5 motif; sequence VNRS. The segment at 280–502 is interaction with caspase ced-9; the sequence is SRNGTPYLAK…LAYINTKHPE (223 aa). The interval 523–542 is disordered; the sequence is GRSRNRHASTGERAVSAHGE. One can recognise a GED domain in the interval 620 to 711; the sequence is VAIIERLIRN…IISEVRETQV (92 aa).

This sequence belongs to the TRAFAC class dynamin-like GTPase superfamily. Dynamin/Fzo/YdjA family. As to quaternary structure, interacts (via residues 280-502) with caspase ced-9; the interaction is enhanced by GTP rather than GDP; the interaction is probably direct and may occur at the mitochondrion. In terms of tissue distribution, highly expressed in neurons, in intestinal cells and in the body wall, pharyngeal, and vulval muscles.

It localises to the mitochondrion. The protein localises to the mitochondrion outer membrane. It is found in the cytoplasm. The protein resides in the cytosol. It catalyses the reaction GTP + H2O = GDP + phosphate + H(+). With respect to regulation, GTPase activity is increased by binding to phospholipid membranes. In terms of biological role, functions in mitochondrial division. Functions in peroxisomal division. Mediates membrane fission, perhaps mainly of the mitochondrial outer membrane. Mitochondrial fission may be promoted by recruitment to mitochondrial membranes via the egl-1/ced-9 complex. Involved in the coordination of mitochondrial division with autophagy in response to acute heat stress during larval development. Plays a role in apoptosis by promoting mitochondrial elimination and cell-death execution, acting downstream of caspase ced-3, and perhaps independently of FIS1-related protein fis-2, caspase ced-9 and apoptosis-inducing factor AIFM/wah-1. Role in promoting apoptosis dependent upon cleavage of drp-1 by ced-3. Involved in negatively modulating longevity in concert with the Insulin/IGF-1-like signaling (IIS) mediated pathway. The polypeptide is Dynamin-1-like protein drp-1 (Caenorhabditis elegans).